Consider the following 135-residue polypeptide: Methylglyoxal synthase (135 aa).

The 135-residue stretch at 1 to 135 (MPKRRRIALI…AQPDPKEIHA (135 aa)) folds into the MGS-like domain. Substrate-binding positions include histidine 12, lysine 16, 38–41 (TGTT), and 58–59 (SG). Aspartate 64 serves as the catalytic Proton donor/acceptor. Histidine 91 is a substrate binding site.

It belongs to the methylglyoxal synthase family.

It carries out the reaction dihydroxyacetone phosphate = methylglyoxal + phosphate. Catalyzes the formation of methylglyoxal from dihydroxyacetone phosphate. The polypeptide is Methylglyoxal synthase (Ralstonia nicotianae (strain ATCC BAA-1114 / GMI1000) (Ralstonia solanacearum)).